The following is a 441-amino-acid chain: 3-oxo-glucose-6-phosphate:glutamate aminotransferase (441 aa).

98-99 contacts substrate; it reads TS. 125–126 lines the pyridoxal 5'-phosphate pocket; sequence GT. A substrate-binding site is contributed by F151. Pyridoxal 5'-phosphate-binding residues include Q225 and S242. Residue 244 to 246 participates in substrate binding; the sequence is NPY. Residue K247 is modified to N6-(pyridoxal phosphate)lysine. 2 residues coordinate substrate: Y274 and K282. Pyridoxal 5'-phosphate is bound at residue N292. Y379 is a substrate binding site.

Belongs to the DegT/DnrJ/EryC1 family. Homodimer. Pyridoxal 5'-phosphate serves as cofactor.

It carries out the reaction 3-dehydro-D-glucose 6-phosphate + L-glutamate = D-kanosamine 6-phosphate + 2-oxoglutarate. It participates in antibiotic biosynthesis; kanosamine biosynthesis. Its function is as follows. Involved in the biosynthesis of kanosamine (3-amino-3-deoxy-D-glucose), which is known to have antibiotic and antifungal properties, and to be a precursor of the antibiotic neotrehalosadiamine (3,3'-diamino-3,3'-dideoxy-alpha,beta-trehalose (NTD)). Catalyzes the reversible pyridoxal phosphate-dependent transamination of 3-dehydro-alpha-D-glucose 6-phosphate to form alpha-D-kanosamine-6-phosphate. It can only use alpha-anomer and glutamate is the only amino donor. This Bacillus subtilis (strain 168) protein is 3-oxo-glucose-6-phosphate:glutamate aminotransferase (ntdA).